The primary structure comprises 156 residues: Ribonuclease H (156 aa).

The region spanning 1 to 142 is the RNase H type-1 domain; the sequence is MGKQVEIFTD…CDELARAAAN (142 aa). Residues Asp10, Glu48, Asp70, and Asp134 each contribute to the Mg(2+) site.

The protein belongs to the RNase H family. As to quaternary structure, monomer. It depends on Mg(2+) as a cofactor.

It is found in the cytoplasm. It carries out the reaction Endonucleolytic cleavage to 5'-phosphomonoester.. Functionally, endonuclease that specifically degrades the RNA of RNA-DNA hybrids. This Photorhabdus luminescens (Xenorhabdus luminescens) protein is Ribonuclease H.